Here is a 466-residue protein sequence, read N- to C-terminus: Alpha-1A adrenergic receptor (466 aa).

The Extracellular portion of the chain corresponds to 1–27 (MVLLSENASEGSNCTHPPAQVNISKAI). Residues N7, N13, and N22 are each glycosylated (N-linked (GlcNAc...) asparagine). The chain crosses the membrane as a helical span at residues 28-51 (LLGVILGGLIIFGVLGNILVILSV). Over 52 to 64 (ACHRHLHSVTHYY) the chain is Cytoplasmic. The helical transmembrane segment at 65-88 (IVNLAVADLLLTSTVLPFSAIFEI) threads the bilayer. Residues 89 to 99 (LGYWAFGRVFC) lie on the Extracellular side of the membrane. An intrachain disulfide couples C99 to C176. A helical transmembrane segment spans residues 100-122 (NIWAAVDVLCCTASIMGLCIISI). Residues 123-143 (DRYIGVSYPLRYPTIVTQRRG) lie on the Cytoplasmic side of the membrane. The chain crosses the membrane as a helical span at residues 144–167 (VRALLCVWALSLVISIGPLFGWRQ). The Extracellular segment spans residues 168–181 (QAPEDETICQINEE). A helical transmembrane segment spans residues 182 to 205 (PGYVLFSALGSFYVPLTIILVMYC). The Cytoplasmic portion of the chain corresponds to 206–273 (RVYVVAKRES…FSREKKAAKT (68 aa)). The residue at position 215 (S215) is a Phosphoserine; by PKA. Residues 274-297 (LGIVVGCFVLCWLPFFLVMPIGSF) traverse the membrane as a helical segment. The Extracellular segment spans residues 298 to 305 (FPNFKPPE). A helical membrane pass occupies residues 306–329 (TVFKIVFWLGYLNSCINPIIYPCS). Residues 330-466 (SQEFKKAFQN…ISLGENGEEV (137 aa)) are Cytoplasmic-facing. The Nuclear localization signal signature appears at 334–349 (KKAFQNVLRIQCLRRR). The S-palmitoyl cysteine moiety is linked to residue C345.

Belongs to the G-protein coupled receptor 1 family. Adrenergic receptor subfamily. ADRA1A sub-subfamily. In terms of assembly, homo- and heterooligomer. Heterooligomerizes with ADRA1B homooligomers in cardiac myocytes. Interacts with CAVIN4.

It is found in the nucleus membrane. The protein resides in the cell membrane. The protein localises to the cytoplasm. It localises to the membrane. Its subcellular location is the caveola. Its function is as follows. This alpha-adrenergic receptor mediates its action by association with G proteins that activate a phosphatidylinositol-calcium second messenger system. Its effect is mediated by G(q) and G(11) proteins. Nuclear ADRA1A-ADRA1B heterooligomers regulate phenylephrine (PE)-stimulated ERK signaling in cardiac myocytes. This chain is Alpha-1A adrenergic receptor (Adra1a), found in Mus musculus (Mouse).